The chain runs to 35 residues: Tamulustoxin-2 (35 aa).

3 cysteine pairs are disulfide-bonded: Cys2-Cys22, Cys7-Cys31, and Cys11-Cys33.

It belongs to the short scorpion toxin superfamily. Potassium channel inhibitor family. In terms of tissue distribution, expressed by the venom gland.

It localises to the secreted. Its function is as follows. Blocks Kv1.6/KCNA6 potassium channels. The chain is Tamulustoxin-2 from Hottentotta tamulus (Eastern Indian scorpion).